Consider the following 1196-residue polypeptide: DNA-directed RNA polymerase subunit beta (1196 aa).

The protein belongs to the RNA polymerase beta chain family. As to quaternary structure, the RNAP catalytic core consists of 2 alpha, 1 beta, 1 beta' and 1 omega subunit. When a sigma factor is associated with the core the holoenzyme is formed, which can initiate transcription.

The enzyme catalyses RNA(n) + a ribonucleoside 5'-triphosphate = RNA(n+1) + diphosphate. In terms of biological role, DNA-dependent RNA polymerase catalyzes the transcription of DNA into RNA using the four ribonucleoside triphosphates as substrates. The protein is DNA-directed RNA polymerase subunit beta of Lactococcus lactis subsp. cremoris (strain SK11).